Consider the following 321-residue polypeptide: tRNA U34 carboxymethyltransferase (321 aa).

Residues Lys90, Trp104, Lys109, Gly129, Asp151–Thr153, Ile180–Glu181, Met195, Tyr199, and Arg314 each bind carboxy-S-adenosyl-L-methionine.

Belongs to the class I-like SAM-binding methyltransferase superfamily. CmoB family. As to quaternary structure, homotetramer.

The enzyme catalyses carboxy-S-adenosyl-L-methionine + 5-hydroxyuridine(34) in tRNA = 5-carboxymethoxyuridine(34) in tRNA + S-adenosyl-L-homocysteine + H(+). In terms of biological role, catalyzes carboxymethyl transfer from carboxy-S-adenosyl-L-methionine (Cx-SAM) to 5-hydroxyuridine (ho5U) to form 5-carboxymethoxyuridine (cmo5U) at position 34 in tRNAs. The sequence is that of tRNA U34 carboxymethyltransferase from Actinobacillus succinogenes (strain ATCC 55618 / DSM 22257 / CCUG 43843 / 130Z).